Reading from the N-terminus, the 240-residue chain is Ubiquinone biosynthesis O-methyltransferase (240 aa).

S-adenosyl-L-methionine-binding residues include arginine 44, glycine 64, aspartate 85, and methionine 129.

The protein belongs to the methyltransferase superfamily. UbiG/COQ3 family.

It catalyses the reaction a 3-demethylubiquinol + S-adenosyl-L-methionine = a ubiquinol + S-adenosyl-L-homocysteine + H(+). It carries out the reaction a 3-(all-trans-polyprenyl)benzene-1,2-diol + S-adenosyl-L-methionine = a 2-methoxy-6-(all-trans-polyprenyl)phenol + S-adenosyl-L-homocysteine + H(+). It participates in cofactor biosynthesis; ubiquinone biosynthesis. Its function is as follows. O-methyltransferase that catalyzes the 2 O-methylation steps in the ubiquinone biosynthetic pathway. The chain is Ubiquinone biosynthesis O-methyltransferase from Escherichia coli O6:H1 (strain CFT073 / ATCC 700928 / UPEC).